The chain runs to 114 residues: Hydrogenase maturation factor HypA (114 aa).

Ni(2+) is bound at residue H2. 4 residues coordinate Zn(2+): C73, C76, C90, and C93.

Belongs to the HypA/HybF family.

Involved in the maturation of [NiFe] hydrogenases. Required for nickel insertion into the metal center of the hydrogenase. The polypeptide is Hydrogenase maturation factor HypA (Klebsiella pneumoniae subsp. pneumoniae (strain ATCC 700721 / MGH 78578)).